Reading from the N-terminus, the 593-residue chain is MSNIVVSNETKSQSVRTTKDGRQIRYNLQVIQQPERARACGSGAKSSADRRPVDPPPIVELRVFENDQEITFAYNANFFLHASLENARTIAPGRAPSTAGPSFPVLTGTPVAGMAYLDRPTPAGYFIFPDLSVRHEGKYRLSFALFENLAEVKDLDPEDPDVIYDGNHFVTHRCEVKSAPFTVFSAKKFPGLSESTALSRMVAEQGCRVRIRRDVRMRRRENKSSKEWDEYDEEGGGYDRARGTATPDNYGQAPNAPLGDRPRSLSSASNPALAPPRRPSIEEMGHGYSASNGYQQQMPPPQTPAYAQMPSYGSNQPQYSQQYQTPQPAPMMQPPQPPQHSTPYSQHSQHSSYSSQHQAQPPVPMNQQYGYSNYQQQPQQPQSQSQPQYDHAAPPRQEQMSSDYAHPSDYRRSSITQSPAQQYTASSHPVQPYHPMDQYGRSQQMSQPLHSSPQSYASSAPSHQSLPSLRPIVADKLEPVSPSYQSPPTSMSAAISVNSDGSNQHYALPKFNPQTQGLPPMSATSNKRSFSSTFDSRHLNERMVAGSRPQPSGAGYSYDPGSPDMEEPMDRAAMSYRRADGTQRQRHVPEVGS.

The segment covering 1–16 (MSNIVVSNETKSQSVR) has biased composition (polar residues). The disordered stretch occupies residues 1-21 (MSNIVVSNETKSQSVRTTKDG). A Velvet domain is found at 21 to 212 (GRQIRYNLQV…AEQGCRVRIR (192 aa)). Residues 35-40 (ERARAC) carry the Nuclear localization signal motif. The tract at residues 218–569 (RRRENKSSKE…PGSPDMEEPM (352 aa)) is disordered. Residues 310 to 326 (PSYGSNQPQYSQQYQTP) are compositionally biased toward low complexity. Residues 327–340 (QPAPMMQPPQPPQH) show a composition bias toward pro residues. Composition is skewed to low complexity over residues 341–360 (STPYSQHSQHSSYSSQHQAQ) and 367–389 (QQYGYSNYQQQPQQPQSQSQPQY). Composition is skewed to polar residues over residues 413–429 (SSITQSPAQQYTASSHP) and 440–449 (GRSQQMSQPL). The interval 443–487 (QQMSQPLHSSPQSYASSAPSHQSLPSLRPIVADKLEPVSPSYQSP) is PEST. Low complexity predominate over residues 450-465 (HSSPQSYASSAPSHQS). Composition is skewed to polar residues over residues 482-505 (PSYQSPPTSMSAAISVNSDGSNQH) and 512-534 (NPQTQGLPPMSATSNKRSFSSTF).

The protein belongs to the velvet family. VeA subfamily. As to quaternary structure, component of the heterotrimeric velvet complex composed of LAE1, VEL1 and VEL2; VEL1 acting as a bridging protein between LAE1 and VEL2.

The protein resides in the nucleus. Its subcellular location is the cytoplasm. Its function is as follows. Component of the velvet transcription factor complex that controls sexual/asexual developmental ratio in response to light, promoting sexual development in the darkness while stimulating asexual sporulation under illumination. The velvet complex acts as a global regulator for secondary metabolite gene expression. Controls the expression of the T-toxin gene cluster. Promotes oxidative stress tolerance and acts as a virulence factors during infection. Negatively regulate mycelial pigmentation and controls sexual development, as well as asexual development during vegetative growth. In Cochliobolus heterostrophus (strain C5 / ATCC 48332 / race O) (Southern corn leaf blight fungus), this protein is Developmental and secondary metabolism regulator VEL1.